We begin with the raw amino-acid sequence, 338 residues long: Glyceraldehyde-3-phosphate dehydrogenase GAPC2, cytosolic (338 aa).

NAD(+) is bound by residues 15 to 16, D37, and R84; that span reads RI. D-glyceraldehyde 3-phosphate is bound at residue 155–157; the sequence is SCT. Catalysis depends on C156, which acts as the Nucleophile. The residue at position 156 (C156) is an S-glutathionyl cysteine; transient; alternate. C156 bears the S-nitrosocysteine; transient; alternate mark. The residue at position 160 (C160) is an S-nitrosocysteine; transient. D-glyceraldehyde 3-phosphate is bound by residues T186, 215–216, and R238; that span reads TG. Position 320 (N320) interacts with NAD(+).

It belongs to the glyceraldehyde-3-phosphate dehydrogenase family. As to quaternary structure, homotetramer. Interacts with PLDDELTA. Binds to DPB3-1/NF-YC10 in response to heat-stress; this interaction promotes DPB3-1/NF-YC10 DNA-binding ability to its target promoter. S-glutathionylation at Cys-156 in the presence of oxidized glutathione (GSSG). S-nitrosylation at Cys-156 and Cys-160 in the presence of S-nitrosoglutathione (GSNO) or sodium nitroprusside (SNP). These reactions may be both a protective mechanism against irreversible oxidation and a mean to store inhibited enzyme in a recoverable form.

The protein resides in the cytoplasm. It is found in the nucleus. It carries out the reaction D-glyceraldehyde 3-phosphate + phosphate + NAD(+) = (2R)-3-phospho-glyceroyl phosphate + NADH + H(+). It participates in carbohydrate degradation; glycolysis; pyruvate from D-glyceraldehyde 3-phosphate: step 1/5. Its activity is regulated as follows. Inhibition by oxidized glutathione (GSSG), S-nitrosoglutathione (GSNO) and hydrogen peroxide. Functionally, key enzyme in glycolysis that catalyzes the first step of the pathway by converting D-glyceraldehyde 3-phosphate (G3P) into 3-phospho-D-glyceroyl phosphate. Essential for the maintenance of cellular ATP levels and carbohydrate metabolism. Binds DNA in vitro. Together with DNA polymerase II subunit B3-1 (DPB3-1) and GAPC1, enhances heat tolerance and promotes the expression of heat-inducible genes. This Arabidopsis thaliana (Mouse-ear cress) protein is Glyceraldehyde-3-phosphate dehydrogenase GAPC2, cytosolic.